Consider the following 705-residue polypeptide: MMQESGSETKSNGSAIQNGSSGGNHLLECGALRDTRSNGEAPAVDLGAADLAHVQQQQQQALQVARQLLLQQQQQQQQQQQQQQQQQQQQQQQQQQQQQQQQQQQQQVSGLKSPKRNDKQPALQVPVSVAMMTPQVITPQQMQQILQQQVLSPQQLQVLLQQQQALMLQQQLQEFYKKQQEQLQLQLLQQQHAGKQPKEQQVATQQLAFQQQLLQMQQLQQQHLLSLQRQGLLTIQPGQPALPLQPLAQGMIPTELQQLWKEVTSAHTAEETTSSNHSSLDLTSTCVSSSAPSKSSLIMNPHASTNGQLSVHTPKRESLSHEEHPHSHPLYGHGVCKWPGCEAVCDDFPAFLKHLNSEHALDDRSTAQCRVQMQVVQQLELQLAKDKERLQAMMTHLHVKSTEPKAAPQPLNLVSSVTLSKSASEASPQSLPHTPTTPTAPLTPVTQGPSVITTTSMHTVGPIRRRYSDKYNVPISSADIAQNQEFYKNAEVRPPFTYASLIRQAILESPEKQLTLNEIYNWFTRMFAYFRRNAATWKNAVRHNLSLHKCFVRVENVKGAVWTVDEVEFQKRRPQKISGNPSLIKNMQSSHAYCTPLNAALQASMAENSIPLYTTASMGNPTLGSLASAIREELNGAMEHTNSNESDSSPGRSPMQAVHPIHVKEEPLDPEEAEGPLSLVTTANHSPDFDHDRDYEDEPVNEDME.

The span at 1–19 (MMQESGSETKSNGSAIQNG) shows a compositional bias: polar residues. Positions 1-41 (MMQESGSETKSNGSAIQNGSSGGNHLLECGALRDTRSNGEA) are disordered. Residue Ser-113 is modified to Phosphoserine. 2 disordered regions span residues 267 to 286 (HTAE…TSTC) and 291 to 326 (APSK…EHPH). Polar residues-rich tracts occupy residues 276 to 286 (NHSSLDLTSTC) and 291 to 311 (APSK…QLSV). Residues 314–326 (PKRESLSHEEHPH) show a composition bias toward basic and acidic residues. A Glycyl lysine isopeptide (Lys-Gly) (interchain with G-Cter in SUMO2) cross-link involves residue Lys-315. A C2H2-type zinc finger spans residues 334–359 (GVCKWPGCEAVCDDFPAFLKHLNSEH). The leucine-zipper stretch occupies residues 376–397 (VQQLELQLAKDKERLQAMMTHL). Glycyl lysine isopeptide (Lys-Gly) (interchain with G-Cter in SUMO2) cross-links involve residues Lys-400 and Lys-405. The segment at 410–414 (PLNLV) is CTBP1-binding. Polar residues predominate over residues 418-431 (TLSKSASEASPQSL). The interval 418–450 (TLSKSASEASPQSLPHTPTTPTAPLTPVTQGPS) is disordered. Low complexity predominate over residues 432–446 (PHTPTTPTAPLTPVT). Residue Lys-470 forms a Glycyl lysine isopeptide (Lys-Gly) (interchain with G-Cter in SUMO2) linkage. Residues 493-583 (RPPFTYASLI…PQKISGNPSL (91 aa)) constitute a DNA-binding region (fork-head). Residues 639 to 705 (EHTNSNESDS…EDEPVNEDME (67 aa)) form a disordered region. Over residues 640–651 (HTNSNESDSSPG) the composition is skewed to polar residues. A Phosphothreonine modification is found at Thr-681. The residue at position 686 (Ser-686) is a Phosphoserine. Positions 695-705 (YEDEPVNEDME) are enriched in acidic residues.

Forms homodimers and heterodimers with FOXP2 and FOXP4. Dimerization is required for DNA-binding. Self-associates. Interacts with CTBP1. Interacts with NCOR2 and AR. Interacts with FOXP2. Interacts with TBR1. Interacts with AURKA; this interaction facilitates the phosphorylation of FOXP1, which suppresses the expression of FBXL7. Interacts with ZMYM2. Isoform 5 is specifically expressed in embryonic stem cells. Highest expression in the lung, brain, and spleen. Lower expression in heart, skeletal muscle, kidney, small intestine (isoform 3 not present) and liver.

Its subcellular location is the nucleus. Its function is as follows. Transcriptional repressor. Can act with CTBP1 to synergistically repress transcription but CTPBP1 is not essential. Plays an important role in the specification and differentiation of lung epithelium. Acts cooperatively with FOXP4 to regulate lung secretory epithelial cell fate and regeneration by restricting the goblet cell lineage program; the function may involve regulation of AGR2. Essential transcriptional regulator of B-cell development. Involved in regulation of cardiac muscle cell proliferation. Involved in the columnar organization of spinal motor neurons. Promotes the formation of the lateral motor neuron column (LMC) and the preganglionic motor column (PGC) and is required for respective appropriate motor axon projections. The segment-appropriate generation of spinal cord motor columns requires cooperation with other Hox proteins. Can regulate PITX3 promoter activity; may promote midbrain identity in embryonic stem cell-derived dopamine neurons by regulating PITX3. Negatively regulates the differentiation of T follicular helper cells T(FH)s. Involved in maintenance of hair follicle stem cell quiescence; the function probably involves regulation of FGF18. Represses transcription of various pro-apoptotic genes and cooperates with NF-kappa B-signaling in promoting B-cell expansion by inhibition of caspase-dependent apoptosis. Binds to CSF1R promoter elements and is involved in regulation of monocyte differentiation and macrophage functions; repression of CSF1R in monocytes seems to involve NCOR2 as corepressor. Involved in endothelial cell proliferation, tube formation and migration indicative for a role in angiogenesis; the role in neovascularization seems to implicate suppression of SEMA5B. Can negatively regulate androgen receptor signaling. Acts as a transcriptional activator of the FBXL7 promoter; this activity is regulated by AURKA. In terms of biological role, involved in transcriptional regulation in embryonic stem cells (ESCs). Stimulates expression of transcription factors that are required for pluripotency and decreases expression of differentiation-associated genes. Has distinct DNA-binding specifities as compared to the canonical form and preferentially binds DNA with the sequence 5'-CGATACAA-3' (or closely related sequences). Promotes ESC self-renewal and pluripotency. The protein is Forkhead box protein P1 (Foxp1) of Mus musculus (Mouse).